The sequence spans 527 residues: Transcription factor RBF1 (527 aa).

Disordered stretches follow at residues 1 to 36, 258 to 281, 328 to 365, 395 to 433, and 470 to 527; these read MSSN…IGAS, ANLY…HNEE, HHLL…QQAA, QLSQ…HGLD, and TQGN…SGFL. The DNA-binding element occupies 160 to 300; that stretch reads HVRDALTTDE…LRMINPQHNH (141 aa). A compositionally biased stretch (basic and acidic residues) spans 263–281; it reads NEKDQKRKNKPDEPGHNEE. 2 stretches are compositionally biased toward low complexity: residues 332–365 and 395–428; these read QQEQ…QQAA and QLSQ…PQQT.

It belongs to the RBF1 family.

The protein resides in the nucleus. It is found in the chromosome. It localises to the telomere. Its function is as follows. Transcriptional activator that binds to the RPG box and to telomeres. Involved in the regulation of the transition between yeast and filamentous forms and plays a role in virulence. Induces expression of HWP1, a major hyphal cell protein and virulence factor. The sequence is that of Transcription factor RBF1 (RBF1) from Candida albicans (Yeast).